Reading from the N-terminus, the 169-residue chain is MEVYIPSFRHEDSDLERGYTVFKIEVLMNGRKHFVEKRYSEFHALHKKLKKCIKTPEIPSKHVRNWVPKVLEQRRQGLETYLQAVILENEELPKLFLDFLNVRHLPSLPKAESCGSFDETESEESSKLSHQPVLLFLGDPYVLPAASDFPNVVIEGVLHGIFFSHLQPR.

Met1 is modified (N-acetylmethionine). The region spanning 1 to 125 is the PX domain; sequence MEVYIPSFRH…SFDETESEES (125 aa). Arg38, Ser40, Lys61, and Arg74 together coordinate a 1,2-diacyl-sn-glycero-3-phospho-(1D-myo-inositol-3-phosphate). Phosphoserine occurs at positions 113 and 116.

The protein belongs to the sorting nexin family.

It is found in the cytoplasmic vesicle membrane. May be involved in several stages of intracellular trafficking. The sequence is that of Sorting nexin-24 (Snx24) from Rattus norvegicus (Rat).